Here is a 688-residue protein sequence, read N- to C-terminus: UvrABC system protein B (688 aa).

The Helicase ATP-binding domain maps to 31 to 414 (GRITAGETDV…LGIADGVVEQ (384 aa)). Residue 44–51 (GATGTGKS) coordinates ATP. The Beta-hairpin motif lies at 97-120 (YYDYYQPEAYVPQTDTFIEKDSSI). One can recognise a Helicase C-terminal domain in the interval 434 to 600 (QIDDLLEEIR…PLRKRIADIT (167 aa)). Residues 614–633 (LAGRDQKRKSPTPSLRSGGI) form a disordered region. The 36-residue stretch at 642-677 (ESLIADLNAQMLAAAGELKFELAARLRDELSDLKRD) folds into the UVR domain.

It belongs to the UvrB family. As to quaternary structure, forms a heterotetramer with UvrA during the search for lesions. Interacts with UvrC in an incision complex.

The protein localises to the cytoplasm. In terms of biological role, the UvrABC repair system catalyzes the recognition and processing of DNA lesions. A damage recognition complex composed of 2 UvrA and 2 UvrB subunits scans DNA for abnormalities. Upon binding of the UvrA(2)B(2) complex to a putative damaged site, the DNA wraps around one UvrB monomer. DNA wrap is dependent on ATP binding by UvrB and probably causes local melting of the DNA helix, facilitating insertion of UvrB beta-hairpin between the DNA strands. Then UvrB probes one DNA strand for the presence of a lesion. If a lesion is found the UvrA subunits dissociate and the UvrB-DNA preincision complex is formed. This complex is subsequently bound by UvrC and the second UvrB is released. If no lesion is found, the DNA wraps around the other UvrB subunit that will check the other stand for damage. In Leifsonia xyli subsp. xyli (strain CTCB07), this protein is UvrABC system protein B.